We begin with the raw amino-acid sequence, 564 residues long: Kelch repeat and BTB domain-containing protein 1 (564 aa).

Positions 21–88 (CDINIVINDE…IYGIPLSLTN (68 aa)) constitute a BTB domain. One can recognise a BACK domain in the interval 123-219 (CIDFYIYADK…SLLSPQVIKS (97 aa)). 6 Kelch repeats span residues 252 to 297 (IELI…VLDN), 298 to 346 (IIYM…ADDE), 347 to 395 (YIYC…MLNG), 397 to 441 (IYVI…VHDG), 442 to 492 (KIYI…SAHN), and 494 to 539 (LYVG…CEPI).

In terms of assembly, interacts (via BTB domain) with host CUL3.

It is found in the host cytoplasm. Functionally, probable substrate-specific adapter of CUL3-containing E3 ubiquitin-protein ligases which mediate the ubiquitination and subsequent proteasomal degradation of host target proteins. This Cowpox virus (strain GRI-90 / Grishak) (CPV) protein is Kelch repeat and BTB domain-containing protein 1 (KBTB1).